Here is a 318-residue protein sequence, read N- to C-terminus: Chlorophyllase-2 (318 aa).

The short motif at 136–140 is the GXSXG element; sequence GHSRG. Residue serine 138 is the Nucleophile of the active site. Active-site charge relay system residues include aspartate 167 and histidine 244.

It belongs to the AB hydrolase superfamily. Lipase family. Expressed in leaves, flowers and flower buds, but not in roots.

The protein resides in the cytoplasm. The protein localises to the cytosol. The enzyme catalyses a chlorophyll + H2O = a chlorophyllide + phytol + H(+). It catalyses the reaction chlorophyll a + H2O = phytol + chlorophyllide a + H(+). It participates in porphyrin-containing compound metabolism; chlorophyll degradation. Its function is as follows. Catalyzes the hydrolysis of ester bond in chlorophyll to yield chlorophyllide and phytol. Does not seem to be required for chlorophyll degradation during senescence. The polypeptide is Chlorophyllase-2 (Arabidopsis thaliana (Mouse-ear cress)).